The following is a 372-amino-acid chain: Queuine tRNA-ribosyltransferase (372 aa).

Asp-90 acts as the Proton acceptor in catalysis. Substrate contacts are provided by residues 90–94 (DSGGF), Asp-144, Gln-193, and Gly-220. Residues 251 to 257 (GVGTPED) are RNA binding. Asp-270 acts as the Nucleophile in catalysis. The tract at residues 275 to 279 (TRNAR) is RNA binding; important for wobble base 34 recognition. 4 residues coordinate Zn(2+): Cys-308, Cys-310, Cys-313, and His-339.

The protein belongs to the queuine tRNA-ribosyltransferase family. As to quaternary structure, homodimer. Within each dimer, one monomer is responsible for RNA recognition and catalysis, while the other monomer binds to the replacement base PreQ1. The cofactor is Zn(2+).

It carries out the reaction 7-aminomethyl-7-carbaguanine + guanosine(34) in tRNA = 7-aminomethyl-7-carbaguanosine(34) in tRNA + guanine. It functions in the pathway tRNA modification; tRNA-queuosine biosynthesis. Catalyzes the base-exchange of a guanine (G) residue with the queuine precursor 7-aminomethyl-7-deazaguanine (PreQ1) at position 34 (anticodon wobble position) in tRNAs with GU(N) anticodons (tRNA-Asp, -Asn, -His and -Tyr). Catalysis occurs through a double-displacement mechanism. The nucleophile active site attacks the C1' of nucleotide 34 to detach the guanine base from the RNA, forming a covalent enzyme-RNA intermediate. The proton acceptor active site deprotonates the incoming PreQ1, allowing a nucleophilic attack on the C1' of the ribose to form the product. After dissociation, two additional enzymatic reactions on the tRNA convert PreQ1 to queuine (Q), resulting in the hypermodified nucleoside queuosine (7-(((4,5-cis-dihydroxy-2-cyclopenten-1-yl)amino)methyl)-7-deazaguanosine). This is Queuine tRNA-ribosyltransferase from Campylobacter hominis (strain ATCC BAA-381 / DSM 21671 / CCUG 45161 / LMG 19568 / NCTC 13146 / CH001A).